Reading from the N-terminus, the 78-residue chain is Beta-defensin 105 (78 aa).

An N-terminal signal peptide occupies residues 1-27 (MALIRKTFYFLFAMFFILVQLPSGCQA). 3 disulfide bridges follow: Cys43–Cys74, Cys53–Cys67, and Cys57–Cys73.

Belongs to the beta-defensin family. In terms of tissue distribution, specifically expressed in testis.

It localises to the secreted. In terms of biological role, has antibacterial activity. This is Beta-defensin 105 (DEFB105A) from Homo sapiens (Human).